Consider the following 290-residue polypeptide: tRNA-cytidine(32) 2-sulfurtransferase (290 aa).

The PP-loop motif signature appears at 36-41 (SGGKDS). [4Fe-4S] cluster is bound by residues Cys-111, Cys-114, and Cys-202. A disordered region spans residues 259-290 (DPWLDAEDEEAEDCGEPAGDGVVSLGGARGGR). Residues 262–273 (LDAEDEEAEDCG) show a composition bias toward acidic residues.

The protein belongs to the TtcA family. In terms of assembly, homodimer. The cofactor is Mg(2+). [4Fe-4S] cluster serves as cofactor.

It is found in the cytoplasm. The catalysed reaction is cytidine(32) in tRNA + S-sulfanyl-L-cysteinyl-[cysteine desulfurase] + AH2 + ATP = 2-thiocytidine(32) in tRNA + L-cysteinyl-[cysteine desulfurase] + A + AMP + diphosphate + H(+). Its pathway is tRNA modification. Functionally, catalyzes the ATP-dependent 2-thiolation of cytidine in position 32 of tRNA, to form 2-thiocytidine (s(2)C32). The sulfur atoms are provided by the cysteine/cysteine desulfurase (IscS) system. This Anaeromyxobacter dehalogenans (strain 2CP-C) protein is tRNA-cytidine(32) 2-sulfurtransferase.